The sequence spans 382 residues: RNA binding protein fox-1 homolog 1 (382 aa).

The segment at Met-1–Val-121 is disordered. The span at Gln-70–Gly-87 shows a compositional bias: polar residues. The span at Thr-88 to Asp-99 shows a compositional bias: low complexity. The segment covering Gly-100–Lys-113 has biased composition (polar residues). The RRM domain maps to Lys-117–Ala-193. Arg-317 carries the post-translational modification Asymmetric dimethylarginine. Residues Met-357 to Ser-382 form a disordered region.

In terms of assembly, binds to the C-terminus of ATXN2.

It is found in the nucleus. It localises to the cytoplasm. Functionally, RNA-binding protein that regulates alternative splicing events by binding to 5'-UGCAUGU-3' elements. Prevents binding of U2AF2 to the 3'-splice site. Regulates alternative splicing of tissue-specific exons and of differentially spliced exons during erythropoiesis. The protein is RNA binding protein fox-1 homolog 1 (RBFOX1) of Pongo abelii (Sumatran orangutan).